A 498-amino-acid polypeptide reads, in one-letter code: Dynein regulatory complex subunit 2 (498 aa).

3 coiled-coil regions span residues 98-160, 250-311, and 417-441; these read VIKS…RKTI, KDEK…KAQR, and SLRH…QYLD.

Belongs to the DRC2 family. As to quaternary structure, component of the nexin-dynein regulatory complex (N-DRC). Interacts with DRC1.

It is found in the cytoplasm. The protein localises to the cytoskeleton. It localises to the flagellum basal body. The protein resides in the cell projection. Its subcellular location is the cilium. It is found in the flagellum. The protein localises to the flagellum axoneme. In terms of biological role, component of the nexin-dynein regulatory complex (N-DRC), a key regulator of ciliary/flagellar motility which maintains the alignment and integrity of the distal axoneme and regulates microtubule sliding in motile axonemes. Plays a critical role in the assembly of N-DRC and also stabilizes the assembly of multiple inner dynein arms and radial spokes. Coassembles with DRC1 to form a central scaffold needed for assembly of the N-DRC and its attachment to the outer doublet microtubules. This chain is Dynein regulatory complex subunit 2 (CCDC65), found in Bos taurus (Bovine).